A 375-amino-acid polypeptide reads, in one-letter code: Alanine racemase (375 aa).

The active-site Proton acceptor; specific for D-alanine is the lysine 40. Lysine 40 is subject to N6-(pyridoxal phosphate)lysine. Residue arginine 140 participates in substrate binding. Tyrosine 268 acts as the Proton acceptor; specific for L-alanine in catalysis. Methionine 315 lines the substrate pocket.

It belongs to the alanine racemase family. The cofactor is pyridoxal 5'-phosphate.

The enzyme catalyses L-alanine = D-alanine. It participates in amino-acid biosynthesis; D-alanine biosynthesis; D-alanine from L-alanine: step 1/1. In terms of biological role, catalyzes the interconversion of L-alanine and D-alanine. May also act on other amino acids. The polypeptide is Alanine racemase (alr) (Limosilactobacillus reuteri (strain DSM 20016) (Lactobacillus reuteri)).